Consider the following 267-residue polypeptide: Acryloyl-CoA reductase electron transfer subunit gamma (267 aa).

Heterohexadecamer; tetramer of tetramers. Each tetramer is composed of 2 alpha (AcrC), a beta (AcrA) and a gamma (AcrB) subunit.

The protein resides in the cytoplasm. In terms of biological role, part of the ETF-acryloyl-CoA reductase complex involved in the pathway of L-alanine fermentation. The electron transfer flavoprotein (ETF) serves as a specific electron acceptor for acryloyl-CoA reductase. This is Acryloyl-CoA reductase electron transfer subunit gamma (acrB) from Anaerotignum propionicum (Clostridium propionicum).